The following is a 30-amino-acid chain: L-amino-acid oxidase (30 aa).

Belongs to the flavin monoamine oxidase family. FIG1 subfamily. As to quaternary structure, monomer. This is in contrast with most of its orthologs, that are non-covalently linked homodimers. FAD is required as a cofactor. Post-translationally, N-glycosylated. Expressed by the venom gland.

It localises to the secreted. It carries out the reaction an L-alpha-amino acid + O2 + H2O = a 2-oxocarboxylate + H2O2 + NH4(+). It catalyses the reaction L-leucine + O2 + H2O = 4-methyl-2-oxopentanoate + H2O2 + NH4(+). The enzyme catalyses L-phenylalanine + O2 + H2O = 3-phenylpyruvate + H2O2 + NH4(+). The catalysed reaction is L-tryptophan + O2 + H2O = indole-3-pyruvate + H2O2 + NH4(+). It carries out the reaction L-methionine + O2 + H2O = 4-methylsulfanyl-2-oxobutanoate + H2O2 + NH4(+). It catalyses the reaction L-2-aminohexanoate + O2 + H2O = 2-oxohexanoate + H2O2 + NH4(+). The enzyme catalyses L-tyrosine + O2 + H2O = 3-(4-hydroxyphenyl)pyruvate + H2O2 + NH4(+). Catalyzes an oxidative deamination of predominantly hydrophobic and aromatic L-amino acids, thus producing hydrogen peroxide that may contribute to the diverse toxic effects of this enzyme. Is highly active against L-Met, L-Leu, L-norleucine (L-2-aminohexanoate), L-Trp, L-Phe, moderately active against L-Tyr, and no active on L-Gly, L-Ala, L-Val, L-Pro, L-His, L-Lys, L-Arg, L-Asp, L-Asn, L-Gln, L-Glu, L-Ser, and L-Thr. Exhibits diverse biological activities, such as hemorrhage, hemolysis, edema, antibacterial and antiparasitic activities. In addition, this protein induces apoptosis. It also interacts with endothelial cells, and inhibits collagen- and ADP-induced platelet aggregation. L-LAAO family effects on platelets are controversial, since it either induces aggregation or inhibits agonist-induced aggregation. These different effects are probably due to different experimental conditions. This Bothrops leucurus (Whitetail lancehead) protein is L-amino-acid oxidase.